Here is a 433-residue protein sequence, read N- to C-terminus: MNRDTSPDLHYLSGFGNEFASEALPGALPVGQNSPQKAPYGLYAELLSGTAFTMARSELRRTWLYRIRPSALHPRFERLARQPLSGPLGGINPNRLRWSPQPIPAEPTDFIEGWLPMVANAAAEKPAGVSIYIYRANRSMERVFFNADGELLLVPEQGRLRIATELGVMEVEPLEIAVIPRGMKFRVELLDGQARGYIAENHGAPLRIPDLGPIGSNGLANPRDFLTPVAHYEEAEAPVQLVQKFLGEHWACELQHSPLDVVAWHGSNVPYKYDLRRFNTIGTVSFDHPDPSIFTVLTSPTSVHGLANMDFVIFPPRWMVAENTFRPPWFHRNLMNEFMGLINGAYDAKAEGFLPGGASLHGVMSAHGPDAETCEKAIAADLAPHKIDNTMAFMFETSQVLRPSLQALECPQLQADYDSCWATLPSTFNPNRR.

Catalysis depends on histidine 288, which acts as the Proton acceptor. Residues histidine 331 and glutamate 337 each contribute to the Fe cation site. Residues tyrosine 346 and histidine 367 each contribute to the homogentisate site. Residue histidine 367 participates in Fe cation binding.

This sequence belongs to the homogentisate dioxygenase family. In terms of assembly, hexamer; dimer of trimers. Fe cation is required as a cofactor.

It catalyses the reaction homogentisate + O2 = 4-maleylacetoacetate + H(+). It functions in the pathway amino-acid degradation; L-phenylalanine degradation; acetoacetate and fumarate from L-phenylalanine: step 4/6. Involved in the catabolism of homogentisate (2,5-dihydroxyphenylacetate or 2,5-OH-PhAc), a central intermediate in the degradation of phenylalanine and tyrosine. Catalyzes the oxidative ring cleavage of the aromatic ring of homogentisate to yield maleylacetoacetate. The sequence is that of Homogentisate 1,2-dioxygenase from Pseudomonas putida (strain GB-1).